The primary structure comprises 586 residues: Cytosolic Fe-S cluster assembly factor NAR1 (586 aa).

Cys-20, Cys-73, Cys-76, Cys-79, Cys-220, Cys-275, Cys-462, and Cys-466 together coordinate [4Fe-4S] cluster.

Belongs to the NARF family.

Functionally, component of the cytosolic Fe/S protein assembly machinery. Required for maturation of extramitochondrial Fe/S proteins. May play a role in the transfer of pre-assembled Fe/S clusters to target apoproteins. The polypeptide is Cytosolic Fe-S cluster assembly factor NAR1 (NAR1) (Chaetomium globosum (strain ATCC 6205 / CBS 148.51 / DSM 1962 / NBRC 6347 / NRRL 1970) (Soil fungus)).